The following is a 417-amino-acid chain: MSVLSSILGMVVLIAIAVLLSNNRKAISIRTVVGALAIQVGFAALILYVPAGKQALGAAADMVSNVIAYGNDGINFVFGGLADPSKPSGFIFAVKVLPIIVFFSGLISVLYYLGIMQVVIKVLGGALQKALGTSKAESMSAAANIFVGQTEAPLVVRPYIKNMTQSELFAIMVGGTASIAGSVMAGYAGMGVPLTYLIAASFMAAPAGLLFAKLMFPQTEQFTDKQPEDNDSEKPTNVLEAMAGGASAGMQLALNVGAMLIAFVGLIALINGILSGVGGWFGYGDLTLQSIFGLIFKPLAYLIGVTDGAEAGIAGQMIGMKLAVNEFVGYLEFAKYLQPDSAIVLTEKTKAIITFALCGFANFSSIAILIGGLGGMAPSRRSDVARLGIKAVIAGTLANLMSATIAGLFIGLGAAAL.

Transmembrane regions (helical) follow at residues 1 to 21, 32 to 52, 96 to 116, 168 to 188, 192 to 212, 261 to 281, 286 to 306, 351 to 371, and 392 to 412; these read MSVL…VLLS, VVGA…VPAG, VLPI…LGIM, LFAI…AGYA, VPLT…LLFA, IAFV…GGWF, LTLQ…IGVT, AIIT…ILIG, and VIAG…FIGL.

Belongs to the concentrative nucleoside transporter (CNT) (TC 2.A.41) family.

The protein localises to the cell inner membrane. This is an uncharacterized protein from Haemophilus influenzae (strain ATCC 51907 / DSM 11121 / KW20 / Rd).